The sequence spans 441 residues: Vacuolar cation/proton exchanger 2 (441 aa).

Over Met-1 to Lys-69 the chain is Cytoplasmic. Residues Ile-70–Val-90 form a helical membrane-spanning segment. Residues His-91–Lys-97 lie on the Extracellular side of the membrane. The chain crosses the membrane as a helical span at residues Gly-98–Ala-118. Residues Thr-119–Thr-129 are Cytoplasmic-facing. A helical membrane pass occupies residues Val-130–Ala-150. The segment at Gly-139 to Val-174 is cation selection. The Extracellular portion of the chain corresponds to Leu-151 to Ser-166. Residues Ile-167–Tyr-187 traverse the membrane as a helical segment. Residues Gln-188 to Gly-196 are Cytoplasmic-facing. A helical membrane pass occupies residues Ile-197–Val-217. The Extracellular segment spans residues Leu-218 to Glu-231. A helical membrane pass occupies residues Leu-232–Phe-252. Over Gln-253–Trp-286 the chain is Cytoplasmic. The helical transmembrane segment at Glu-287–Val-307 threads the bilayer. Residues Asp-308–Glu-311 are Extracellular-facing. A helical transmembrane segment spans residues Gly-312–Val-332. Residues Gly-333–Leu-354 lie on the Cytoplasmic side of the membrane. The tract at residues Gly-333–Ala-368 is cation selection. A helical transmembrane segment spans residues Gly-355 to Ile-375. Over Gly-376–Asp-384 the chain is Extracellular. Residues Leu-385–Phe-405 traverse the membrane as a helical segment. Over Leu-406–Asn-412 the chain is Cytoplasmic. The helical transmembrane segment at Tyr-413–His-433 threads the bilayer. At Glu-434–Ile-441 the chain is on the extracellular side.

This sequence belongs to the Ca(2+):cation antiporter (CaCA) (TC 2.A.19) family. Cation/proton exchanger (CAX) subfamily.

It localises to the vacuole membrane. Its activity is regulated as follows. Inhibited by excess of Ca(2+) and Cd(2+), Mn(2+), and Zn(2+). Vacuolar cation/proton exchanger (CAX). Translocates Ca(2+) and other metal ions into vacuoles using the proton gradient formed by H(+)-ATPase and H(+)-pyrophosphatase. This is Vacuolar cation/proton exchanger 2 (CAX2) from Arabidopsis thaliana (Mouse-ear cress).